Here is a 145-residue protein sequence, read N- to C-terminus: Photosystem I reaction center subunit VI-1, chloroplastic (145 aa).

A chloroplast-targeting transit peptide spans 1–50; it reads MASLATVAAVKPSAAIKGLGGSSLAGAKLSIKPSRLSFKPKSIRANGVVA. The helical transmembrane segment at 102–118 threads the bilayer; it reads LLLKFLILGGGSLLTYV.

The protein belongs to the psaH family.

It is found in the plastid. The protein localises to the chloroplast thylakoid membrane. In terms of biological role, possible role could be the docking of the LHC I antenna complex to the core complex. The polypeptide is Photosystem I reaction center subunit VI-1, chloroplastic (PSAH1) (Arabidopsis thaliana (Mouse-ear cress)).